A 304-amino-acid polypeptide reads, in one-letter code: Aspartate carbamoyltransferase catalytic subunit (304 aa).

Carbamoyl phosphate is bound by residues Arg-49 and Thr-50. An L-aspartate-binding site is contributed by Lys-77. 3 residues coordinate carbamoyl phosphate: Arg-99, His-127, and Gln-130. Arg-160 and Arg-211 together coordinate L-aspartate. Carbamoyl phosphate contacts are provided by Ala-250 and Pro-251.

This sequence belongs to the aspartate/ornithine carbamoyltransferase superfamily. ATCase family. As to quaternary structure, heterododecamer (2C3:3R2) of six catalytic PyrB chains organized as two trimers (C3), and six regulatory PyrI chains organized as three dimers (R2).

It carries out the reaction carbamoyl phosphate + L-aspartate = N-carbamoyl-L-aspartate + phosphate + H(+). Its pathway is pyrimidine metabolism; UMP biosynthesis via de novo pathway; (S)-dihydroorotate from bicarbonate: step 2/3. Its function is as follows. Catalyzes the condensation of carbamoyl phosphate and aspartate to form carbamoyl aspartate and inorganic phosphate, the committed step in the de novo pyrimidine nucleotide biosynthesis pathway. The polypeptide is Aspartate carbamoyltransferase catalytic subunit (Bacillus velezensis (strain DSM 23117 / BGSC 10A6 / LMG 26770 / FZB42) (Bacillus amyloliquefaciens subsp. plantarum)).